Consider the following 444-residue polypeptide: Magnesium transporter MRS2-F (444 aa).

The tract at residues 128-155 (FTDMEGESSAVTSPFPALTSTTPNELEM) is disordered. Positions 145–155 (LTSTTPNELEM) are enriched in polar residues. A coiled-coil region spans residues 195 to 258 (VCLESACRSL…QKVRDELEHL (64 aa)). The chain crosses the membrane as a helical span at residues 370 to 390 (GVMLSTATVVITAGVAVVGLF). A Required for magnesium transport activity motif is present at residues 391–393 (GMN). Residues 415–435 (FWETTLGTIAGCTVMYIVAMG) traverse the membrane as a helical segment.

Belongs to the CorA metal ion transporter (MIT) (TC 1.A.35.5) family.

It is found in the membrane. In terms of biological role, magnesium transporter that may mediate the influx of magnesium. The chain is Magnesium transporter MRS2-F (MRS2-F) from Oryza sativa subsp. indica (Rice).